The following is a 304-amino-acid chain: Aspartate carbamoyltransferase catalytic subunit (304 aa).

Positions 49 and 50 each coordinate carbamoyl phosphate. Residue Lys77 participates in L-aspartate binding. 3 residues coordinate carbamoyl phosphate: Arg99, His127, and Gln130. L-aspartate is bound by residues Arg160 and Arg211. Carbamoyl phosphate-binding residues include Ala252 and Pro253.

The protein belongs to the aspartate/ornithine carbamoyltransferase superfamily. ATCase family. Heterododecamer (2C3:3R2) of six catalytic PyrB chains organized as two trimers (C3), and six regulatory PyrI chains organized as three dimers (R2).

It catalyses the reaction carbamoyl phosphate + L-aspartate = N-carbamoyl-L-aspartate + phosphate + H(+). Its pathway is pyrimidine metabolism; UMP biosynthesis via de novo pathway; (S)-dihydroorotate from bicarbonate: step 2/3. Catalyzes the condensation of carbamoyl phosphate and aspartate to form carbamoyl aspartate and inorganic phosphate, the committed step in the de novo pyrimidine nucleotide biosynthesis pathway. In Bacillus cereus (strain ZK / E33L), this protein is Aspartate carbamoyltransferase catalytic subunit.